A 106-amino-acid chain; its full sequence is Defensin-like protein 1 (106 aa).

Residues 1 to 25 form the signal peptide; that stretch reads MARSLCFMAFAVLAMMLFVAYEVQA. Disulfide bonds link C29/C73, C40/C60, C46/C67, and C50/C69.

The protein belongs to the DEFL family.

Its subcellular location is the secreted. The protein localises to the vacuole. The sequence is that of Defensin-like protein 1 (THIO1) from Nicotiana paniculata.